The following is a 429-amino-acid chain: S-adenosylmethionine synthase (429 aa).

An ATP-binding site is contributed by His-14. Asp-16 is a Mg(2+) binding site. Position 42 (Glu-42) interacts with K(+). L-methionine-binding residues include Glu-55 and Gln-98. Residues 98–108 form a flexible loop region; it reads QSADINRGVDR. Residues 165–167, 252–253, Asp-261, 267–268, Ala-284, and Lys-288 each bind ATP; these read DAK, KF, and RK. Asp-261 provides a ligand contact to L-methionine. Residue Lys-292 coordinates L-methionine.

The protein belongs to the AdoMet synthase family. As to quaternary structure, homotetramer; dimer of dimers. Mg(2+) serves as cofactor. Requires K(+) as cofactor.

The protein resides in the cytoplasm. The enzyme catalyses L-methionine + ATP + H2O = S-adenosyl-L-methionine + phosphate + diphosphate. The protein operates within amino-acid biosynthesis; S-adenosyl-L-methionine biosynthesis; S-adenosyl-L-methionine from L-methionine: step 1/1. In terms of biological role, catalyzes the formation of S-adenosylmethionine (AdoMet) from methionine and ATP. The overall synthetic reaction is composed of two sequential steps, AdoMet formation and the subsequent tripolyphosphate hydrolysis which occurs prior to release of AdoMet from the enzyme. The protein is S-adenosylmethionine synthase of Porphyromonas gingivalis (strain ATCC BAA-308 / W83).